The primary structure comprises 117 residues: Putative iron-sulfur cluster insertion protein ErpA (117 aa).

Cys-45, Cys-109, and Cys-111 together coordinate iron-sulfur cluster.

Belongs to the HesB/IscA family. Homodimer. Iron-sulfur cluster is required as a cofactor.

Required for insertion of 4Fe-4S clusters. The polypeptide is Putative iron-sulfur cluster insertion protein ErpA (Methylobacillus flagellatus (strain ATCC 51484 / DSM 6875 / VKM B-1610 / KT)).